We begin with the raw amino-acid sequence, 477 residues long: Bifunctional protein HldE (477 aa).

The tract at residues 1–318 is ribokinase; sequence MKVTLPEFER…ENAVRGRADT (318 aa). At Lys179 the chain carries N6-acetyllysine. Residue 195–198 participates in ATP binding; that stretch reads NLSE. Asp264 is a catalytic residue. The interval 344-477 is cytidylyltransferase; it reads MTNGVFDILH…IKKIQQDKKG (134 aa).

It in the N-terminal section; belongs to the carbohydrate kinase PfkB family. This sequence in the C-terminal section; belongs to the cytidylyltransferase family. Homodimer.

The enzyme catalyses D-glycero-beta-D-manno-heptose 7-phosphate + ATP = D-glycero-beta-D-manno-heptose 1,7-bisphosphate + ADP + H(+). It catalyses the reaction D-glycero-beta-D-manno-heptose 1-phosphate + ATP + H(+) = ADP-D-glycero-beta-D-manno-heptose + diphosphate. It functions in the pathway nucleotide-sugar biosynthesis; ADP-L-glycero-beta-D-manno-heptose biosynthesis; ADP-L-glycero-beta-D-manno-heptose from D-glycero-beta-D-manno-heptose 7-phosphate: step 1/4. It participates in nucleotide-sugar biosynthesis; ADP-L-glycero-beta-D-manno-heptose biosynthesis; ADP-L-glycero-beta-D-manno-heptose from D-glycero-beta-D-manno-heptose 7-phosphate: step 3/4. Catalyzes the phosphorylation of D-glycero-D-manno-heptose 7-phosphate at the C-1 position to selectively form D-glycero-beta-D-manno-heptose-1,7-bisphosphate. Functionally, catalyzes the ADP transfer from ATP to D-glycero-beta-D-manno-heptose 1-phosphate, yielding ADP-D-glycero-beta-D-manno-heptose. This chain is Bifunctional protein HldE, found in Shigella sonnei (strain Ss046).